Reading from the N-terminus, the 223-residue chain is RNA-free ribonuclease P (223 aa).

The protein belongs to the HARP family.

It catalyses the reaction Endonucleolytic cleavage of RNA, removing 5'-extranucleotides from tRNA precursor.. RNA-free RNase P that catalyzes the removal of the 5'-leader sequence from pre-tRNA to produce the mature 5'-terminus. This chain is RNA-free ribonuclease P, found in Methanococcus maripaludis (strain DSM 14266 / JCM 13030 / NBRC 101832 / S2 / LL).